Here is a 246-residue protein sequence, read N- to C-terminus: Sec-independent protein translocase protein TatB (246 aa).

Residues 1-21 (MFDIGWSELLVIAVVLIVVVG) form a helical membrane-spanning segment. 3 disordered regions span residues 94 to 122 (SDLQ…APLV), 179 to 204 (SRSK…PKPT), and 225 to 246 (VADA…KDEA). Polar residues-rich tracts occupy residues 97 to 112 (QKAT…TAAP) and 187 to 197 (PETTVATNASE).

It belongs to the TatB family. In terms of assembly, the Tat system comprises two distinct complexes: a TatABC complex, containing multiple copies of TatA, TatB and TatC subunits, and a separate TatA complex, containing only TatA subunits. Substrates initially bind to the TatABC complex, which probably triggers association of the separate TatA complex to form the active translocon.

Its subcellular location is the cell inner membrane. Part of the twin-arginine translocation (Tat) system that transports large folded proteins containing a characteristic twin-arginine motif in their signal peptide across membranes. Together with TatC, TatB is part of a receptor directly interacting with Tat signal peptides. TatB may form an oligomeric binding site that transiently accommodates folded Tat precursor proteins before their translocation. The sequence is that of Sec-independent protein translocase protein TatB from Agrobacterium fabrum (strain C58 / ATCC 33970) (Agrobacterium tumefaciens (strain C58)).